Here is a 172-residue protein sequence, read N- to C-terminus: AIG2-like protein C (172 aa).

13 to 18 (YGSLQE) lines the substrate pocket. The active-site Proton acceptor is E81.

This sequence belongs to the gamma-glutamylcyclotransferase family. In terms of tissue distribution, expressed in flowers, leaves, stems and roots.

In terms of biological role, putative gamma-glutamylcyclotransferase. The polypeptide is AIG2-like protein C (Arabidopsis thaliana (Mouse-ear cress)).